Consider the following 479-residue polypeptide: GTPase Der (479 aa).

EngA-type G domains lie at 3 to 167 (FKVA…GEAR) and 208 to 383 (MRIA…KVWN). GTP-binding positions include 9–16 (GRPNVGKS), 56–60 (DTAGF), 119–122 (NKAE), 214–221 (GRPNAGKS), 261–265 (DTAGM), and 326–329 (NKWD). A KH-like domain is found at 384-468 (SRVSTGKLNR…PIRIALRTSD (85 aa)).

This sequence belongs to the TRAFAC class TrmE-Era-EngA-EngB-Septin-like GTPase superfamily. EngA (Der) GTPase family. Associates with the 50S ribosomal subunit.

Its function is as follows. GTPase that plays an essential role in the late steps of ribosome biogenesis. This is GTPase Der from Mesorhizobium japonicum (strain LMG 29417 / CECT 9101 / MAFF 303099) (Mesorhizobium loti (strain MAFF 303099)).